An 825-amino-acid polypeptide reads, in one-letter code: MKDRSSTPPLHVHVDENTPVHVHIKKLPKPSAASSQKSHKRGMKGDTVNVRRSVRVKTKVPWMPPGKSSARHVGCKWENPPHCLEITPPSSEKLVSVMRLSDLSTEDDDSGHCKMNRYDKKIDSLMNAVGCLKSEVKMQKGERQMAKRFLEERKEELEEVAHELAETEHENTVLRHNIERIKEEKDFTMLQKKHLQQEKECLMSKLVEAEMDGAAAAKQVMALKDTIGKLKTEKQMTCTDINTLTRQKELLLQKLSTFEETNRTLRDLLREQHCKEDSERLMEQQGALLKRLAEADSEKARLLLLLQDKDKEVEELLQEIQCEKAQAKTASELSKSMESMRGHLQAQLRCKEAENSRLCMQIKNLERSGNQHKAEVEAIMEQLKELKQKGDRDKETLKKAIRAQKERAEKSEEYAEQLHVQLADKDLYVAEALSTLESWRSRYNQVVKDKGDLELEIIVLNDRVTDLVNQQQSLEEKMREDRDSLVERLHRQTAEYSAFKLENERLKASFAPMEDKLNQAHLEVQQLKASVKNYEGMIDNYKSQVMKTRLEADEVAAQLERCDKENKMLKDEMNKEIEAARRQFQSQLADLQQLPDILKITEAKLAECQDQLQGYERKNIDLTAIISDLRSRIEHQGDKLELAREKHQASQKENKQLSQKVDELERKLEATSTQNVEFLQVIAKREEAIHQAQLRLEEKTRECGSLARQLESAIEDARRQVEQTKEQALSKERAAQSKILDLETQLSRTKTELGQLRRTRDDVDRRYQSRLQDLKDRLEQSESTNRSMQNYVQFLKSSYANVFGDGPYTSSYLTSSPIRSRSPPA.

Residues valine 22, lysine 37, serine 68, and serine 69 each carry the phosphoserine modification. The disordered stretch occupies residues 27–46 (LPKPSAASSQKSHKRGMKGD). Threonine 87 carries the post-translational modification Phosphothreonine. Residue serine 90 is modified to Phosphoserine; by TSSK4. Phosphoserine is present on residues serine 101 and serine 104. Position 105 is a phosphothreonine (threonine 105). Phosphoserine is present on residues serine 110 and serine 124. A Glycyl lysine isopeptide (Lys-Gly) (interchain with G-Cter in SUMO2) cross-link involves residue lysine 133. Serine 134 is subject to Phosphoserine. A coiled-coil region spans residues 139–212 (QKGERQMAKR…MSKLVEAEMD (74 aa)). Threonine 226 is subject to Phosphothreonine. 2 coiled-coil regions span residues 240 to 418 (DINT…AEQL) and 456 to 793 (EIIV…NYVQ). 2 positions are modified to phosphoserine: serine 256 and serine 627. The interval 532-696 (KNYEGMIDNY…EAIHQAQLRL (165 aa)) is interaction with BBOF1.

It belongs to the ODF2 family. As to quaternary structure, self-associates. Associates with microtubules and forms a fibrillar structure partially linked to the microtubule network. Interacts through its C-terminus with PLK1. Interacts with ODF1. Interacts with MARK4; the interaction is required for localization of ODF2 to centrioles. Interacts with TSSK4. Interacts with AKNA. Interacts with QRICH2. Interacts with CFAP58. Interacts with BBOF1. Interacts with CCDC38. Interacts with CCDC42. Tyrosine phosphorylated. Phosphorylated on Ser-90 by TSSK4. Testis-specific. Expressed in the proximal compartment of the elongated spermatid tail; later expression progresses to the distal spermatid tail compartment located in the lumen of the seminiferous epithelium. In spermatids (stages II-III) expression of the tails peaks and remains strong during the remaining steps of spermiogenesis (at protein level). Expression correlates with the onset of spermatogenesis and is first detected at 30 days. Higher expression is seen in testis of 40-day-old and adults that are older than 50 days. No expression is seen in 10- and 20-day-old testes.

The protein localises to the cytoplasm. It localises to the cytoskeleton. Its subcellular location is the microtubule organizing center. The protein resides in the centrosome. It is found in the cell projection. The protein localises to the cilium. It localises to the centriole. Its subcellular location is the spindle pole. The protein resides in the flagellum. Functionally, seems to be a major component of sperm tail outer dense fibers (ODF). ODFs are filamentous structures located on the outside of the axoneme in the midpiece and principal piece of the mammalian sperm tail and may help to maintain the passive elastic structures and elastic recoil of the sperm tail. May have a modulating influence on sperm motility. Functions as a general scaffold protein that is specifically localized at the distal/subdistal appendages of mother centrioles. Component of the centrosome matrix required for the localization of PLK1 and NIN to the centrosomes. Required for the formation and/or maintenance of normal CETN1 assembly. This Rattus norvegicus (Rat) protein is Outer dense fiber protein 2 (Odf2).